A 74-amino-acid chain; its full sequence is uncharacterized protein (74 aa).

This is an uncharacterized protein from Invertebrate iridescent virus 6 (IIV-6).